An 87-amino-acid polypeptide reads, in one-letter code: Small ribosomal subunit protein bS20 (87 aa).

Residues 1 to 11 (MANIKSKKKRI) are compositionally biased toward basic residues. Residues 1–25 (MANIKSKKKRIKTNEKARQRNKAIR) form a disordered region.

This sequence belongs to the bacterial ribosomal protein bS20 family.

Its function is as follows. Binds directly to 16S ribosomal RNA. This chain is Small ribosomal subunit protein bS20, found in Corynebacterium kroppenstedtii (strain DSM 44385 / JCM 11950 / CIP 105744 / CCUG 35717).